The sequence spans 220 residues: Inner membrane-spanning protein YciB (220 aa).

6 helical membrane passes run 20-40, 57-77, 86-106, 123-143, 156-176, and 187-207; these read EVPPLLKLALELGPLLVFFFA, IGAPIFLATALFMAATVIALA, LPIMPLVSGIVVLVFGALTLW, LFGGILLGGLFFGKSLLGYVF, KLTLRWALFFIFLAIVNEIVW, and FKVWGIMPITIVFTLLQMPLI.

It belongs to the YciB family.

The protein resides in the cell inner membrane. Functionally, plays a role in cell envelope biogenesis, maintenance of cell envelope integrity and membrane homeostasis. The polypeptide is Inner membrane-spanning protein YciB (Brucella melitensis biotype 2 (strain ATCC 23457)).